Here is a 407-residue protein sequence, read N- to C-terminus: Argininosuccinate synthase (407 aa).

Residues 16 to 24 and alanine 44 each bind ATP; that span reads AYSGGLDTS. Residues tyrosine 96 and serine 101 each contribute to the L-citrulline site. Glycine 126 lines the ATP pocket. L-aspartate contacts are provided by threonine 128, asparagine 132, and aspartate 133. Asparagine 132 is a binding site for L-citrulline. The L-citrulline site is built by arginine 136, serine 185, serine 194, glutamate 270, and tyrosine 282.

It belongs to the argininosuccinate synthase family. Type 1 subfamily. As to quaternary structure, homotetramer.

It localises to the cytoplasm. The catalysed reaction is L-citrulline + L-aspartate + ATP = 2-(N(omega)-L-arginino)succinate + AMP + diphosphate + H(+). It participates in amino-acid biosynthesis; L-arginine biosynthesis; L-arginine from L-ornithine and carbamoyl phosphate: step 2/3. The chain is Argininosuccinate synthase from Shewanella loihica (strain ATCC BAA-1088 / PV-4).